The primary structure comprises 241 residues: Prolactin-8A8 (241 aa).

Residues 1-30 form the signal peptide; the sequence is MELQFRQPHFSDALLLLLLSNLLLWEKASS. Cystine bridges form between Cys-34/Cys-41, Cys-101/Cys-217, and Cys-234/Cys-241. The N-linked (GlcNAc...) asparagine glycan is linked to Asn-213.

This sequence belongs to the somatotropin/prolactin family. As to expression, expressed specifically in the placenta. Predominantly expressed in spongiotrophoblast cells.

The protein resides in the secreted. This is Prolactin-8A8 (Prl8a8) from Mus musculus (Mouse).